A 606-amino-acid chain; its full sequence is Polypeptide N-acetylgalactosaminyltransferase 9 (606 aa).

Topologically, residues 1–6 are cytoplasmic; it reads MAVARK. Residues 7–29 form a helical; Signal-anchor for type II membrane protein membrane-spanning segment; sequence IRTLLTVNILVFVGIVLFSVYCR. Over 30 to 606 the chain is Lumenal; the sequence is LQGRSQELVR…IRNWIKHARH (577 aa). Residues 43–62 are disordered; the sequence is GGCRPRPATPAPGSPLRSGG. Cystine bridges form between cysteine 144/cysteine 375 and cysteine 366/cysteine 445. Positions 153–264 are catalytic subdomain A; sequence LPQVSVVFIF…TGWAEPALSR (112 aa). Residues aspartate 194 and arginine 225 each contribute to the substrate site. Mn(2+)-binding residues include aspartate 248, histidine 250, and histidine 380. Residues 321–383 are catalytic subdomain B; sequence PIRTPAMIGC…PCSRVAHIER (63 aa). Positions 383 and 388 each coordinate substrate. A glycan (N-linked (GlcNAc...) asparagine) is linked at asparagine 463. The 137-residue stretch at 467 to 603 folds into the Ricin B-type lectin domain; that stretch reads TYGEVRNSKA…KWMIRNWIKH (137 aa). Intrachain disulfides connect cysteine 480/cysteine 496, cysteine 528/cysteine 543, and cysteine 570/cysteine 590.

The protein belongs to the glycosyltransferase 2 family. GalNAc-T subfamily. Mn(2+) is required as a cofactor.

Its subcellular location is the golgi apparatus membrane. It carries out the reaction L-seryl-[protein] + UDP-N-acetyl-alpha-D-galactosamine = a 3-O-[N-acetyl-alpha-D-galactosaminyl]-L-seryl-[protein] + UDP + H(+). The catalysed reaction is L-threonyl-[protein] + UDP-N-acetyl-alpha-D-galactosamine = a 3-O-[N-acetyl-alpha-D-galactosaminyl]-L-threonyl-[protein] + UDP + H(+). Its pathway is protein modification; protein glycosylation. Functionally, catalyzes the initial reaction in O-linked oligosaccharide biosynthesis, the transfer of an N-acetyl-D-galactosamine residue to a serine or threonine residue on the protein receptor. Does not glycosylate apomucin or SDC3. The protein is Polypeptide N-acetylgalactosaminyltransferase 9 (GALNT9) of Macaca fascicularis (Crab-eating macaque).